We begin with the raw amino-acid sequence, 416 residues long: GTPase ERA1, chloroplastic (416 aa).

Residues 1–53 (MELGLALRLVAPPPLLPCLSRRALSLPPDFVSSRVLRGRRIHASRLKHGAGVV) constitute a chloroplast transit peptide. The Era-type G domain maps to 117-287 (RSGYVAVLGK…KEWILSKLPL (171 aa)). The segment at 125-132 (GKPNVGKS) is G1. Residue 125–132 (GKPNVGKS) coordinates GTP. The interval 151–155 (QTTRH) is G2. Positions 172–175 (DTPG) are G3. Residues 172–176 (DTPGV) and 237–240 (NKKD) contribute to the GTP site. Positions 237 to 240 (NKKD) are G4. The segment at 266 to 268 (ISA) is G5. One can recognise a KH type-2 domain in the interval 318–395 (YRQEIPYSCQ…YLEVEVKVKE (78 aa)).

The protein belongs to the TRAFAC class TrmE-Era-EngA-EngB-Septin-like GTPase superfamily. Era GTPase family.

Its subcellular location is the plastid. It is found in the chloroplast stroma. The protein localises to the chloroplast nucleoid. In terms of biological role, nuclear genome-encoded probable GTPase involved in ribosome biogenesis in chloroplasts. Plays a role in 16S rRNA maturation in plastids and may contribute to the assembly of the small (30S) ribosomal subunit. The polypeptide is GTPase ERA1, chloroplastic (Zea mays (Maize)).